Reading from the N-terminus, the 213-residue chain is Sclerostin (213 aa).

Residues 1–23 (MQLPLALCLVCLLVHAAFRVVEG) form the signal peptide. A disordered region spans residues 41 to 71 (GEYPEPPPELENNKTMNRAENGGRPPHHPFE). N-linked (GlcNAc...) asparagine glycosylation occurs at Asn-53. Intrachain disulfides connect Cys-80/Cys-134, Cys-94/Cys-148, Cys-105/Cys-165, and Cys-109/Cys-167. Residues 82–172 (ELHFTRYVTD…ASCKCKRLTR (91 aa)) form the CTCK domain. Asn-175 carries N-linked (GlcNAc...) asparagine glycosylation. The segment at 178 to 213 (ELKDFGPEAARPQKGRKPRPRARGAKANQAELENAY) is disordered. A compositionally biased stretch (basic residues) spans 190 to 201 (QKGRKPRPRARG).

The protein belongs to the sclerostin family. As to quaternary structure, interacts with LRP4 (via the extracellular domain); the interaction facilitates the inhibition of Wnt signaling. Interacts with LRP5 (via the first two YWTD-EGF repeat domains); the interaction inhibits Wnt-mediated signaling. Interacts with LRP6.

The protein resides in the secreted. The protein localises to the extracellular space. It is found in the extracellular matrix. Negative regulator of bone growth that acts through inhibition of Wnt signaling and bone formation. The protein is Sclerostin of Chlorocebus aethiops (Green monkey).